The chain runs to 340 residues: Ribonucleoside-diphosphate reductase subunit beta (340 aa).

Positions 88 and 122 each coordinate Fe cation. Residue Tyr126 is part of the active site. Position 216 (His216) interacts with Fe cation.

The protein belongs to the ribonucleoside diphosphate reductase small chain family. In terms of assembly, tetramer of two alpha and two beta subunits. The cofactor is Fe cation.

It carries out the reaction a 2'-deoxyribonucleoside 5'-diphosphate + [thioredoxin]-disulfide + H2O = a ribonucleoside 5'-diphosphate + [thioredoxin]-dithiol. Its function is as follows. Provides the precursors necessary for DNA synthesis. Catalyzes the biosynthesis of deoxyribonucleotides from the corresponding ribonucleotides. The sequence is that of Ribonucleoside-diphosphate reductase subunit beta (nrdF) from Mycoplasma genitalium (strain ATCC 33530 / DSM 19775 / NCTC 10195 / G37) (Mycoplasmoides genitalium).